Reading from the N-terminus, the 396-residue chain is Elongation factor Tu (396 aa).

Positions 10–206 constitute a tr-type G domain; sequence KPHVNVGTIG…ALDSYIPTPE (197 aa). The tract at residues 19–26 is G1; that stretch reads GHVDHGKT. 19-26 contacts GTP; sequence GHVDHGKT. Residue threonine 26 participates in Mg(2+) binding. Positions 60 to 64 are G2; it reads GITIN. The tract at residues 81–84 is G3; that stretch reads DCPG. GTP-binding positions include 81–85 and 136–139; these read DCPGH and NKCD. The segment at 136–139 is G4; that stretch reads NKCD. A G5 region spans residues 174–176; the sequence is SAL.

This sequence belongs to the TRAFAC class translation factor GTPase superfamily. Classic translation factor GTPase family. EF-Tu/EF-1A subfamily. Monomer.

The protein resides in the cytoplasm. The catalysed reaction is GTP + H2O = GDP + phosphate + H(+). Functionally, GTP hydrolase that promotes the GTP-dependent binding of aminoacyl-tRNA to the A-site of ribosomes during protein biosynthesis. The polypeptide is Elongation factor Tu (Aromatoleum aromaticum (strain DSM 19018 / LMG 30748 / EbN1) (Azoarcus sp. (strain EbN1))).